The sequence spans 312 residues: Pyrimidine-specific ribonucleoside hydrolase RihA (312 aa).

His240 is a catalytic residue.

This sequence belongs to the IUNH family. RihA subfamily.

Hydrolyzes cytidine or uridine to ribose and cytosine or uracil, respectively. The chain is Pyrimidine-specific ribonucleoside hydrolase RihA from Shewanella woodyi (strain ATCC 51908 / MS32).